The following is a 223-amino-acid chain: Protein-L-isoaspartate O-methyltransferase (223 aa).

Ser-70 is an active-site residue.

This sequence belongs to the methyltransferase superfamily. L-isoaspartyl/D-aspartyl protein methyltransferase family.

The protein resides in the cytoplasm. The enzyme catalyses [protein]-L-isoaspartate + S-adenosyl-L-methionine = [protein]-L-isoaspartate alpha-methyl ester + S-adenosyl-L-homocysteine. Catalyzes the methyl esterification of L-isoaspartyl residues in peptides and proteins that result from spontaneous decomposition of normal L-aspartyl and L-asparaginyl residues. It plays a role in the repair and/or degradation of damaged proteins. In Methylobacillus flagellatus (strain ATCC 51484 / DSM 6875 / VKM B-1610 / KT), this protein is Protein-L-isoaspartate O-methyltransferase.